Consider the following 352-residue polypeptide: MLYSFYKVFCLKDYVFKKARIFVKENKLKANIVFPESSDSRVLKAAIVILQKNLADSIILIGKKDTVINSLKEFSNCNDILGRIEVVDPNSFPDIEMYLDEYWSLQKLKGVTKQSLKTQVLDEITFAMLMVRFGYAKSCVCGAVSTSAKVLSNALRIIPKLEGVKIISSFMIMDTLCTARNVDFCFGHNGILFFADCSVVVNPNSLELAEIALQSAKSFKDILNAKPKVALLSFSTKGSSSAKETEKVKNALNIVRNKESDLLIDGELQLDSAIIKDVAEKKCRESLVAGSANVLIFPNLDAGNIGYKLVERFAFAKAYGPFLQGFSKPISDLSRGCSVDEIVFASALMISI.

It belongs to the phosphate acetyltransferase and butyryltransferase family.

The protein resides in the cytoplasm. It carries out the reaction acetyl-CoA + phosphate = acetyl phosphate + CoA. Its pathway is metabolic intermediate biosynthesis; acetyl-CoA biosynthesis; acetyl-CoA from acetate: step 2/2. The protein is Phosphate acetyltransferase (pta) of Borreliella burgdorferi (strain ATCC 35210 / DSM 4680 / CIP 102532 / B31) (Borrelia burgdorferi).